A 320-amino-acid chain; its full sequence is Cytochrome f (320 aa).

An N-terminal signal peptide occupies residues 1-35 (MRNINTYDWMKKWMTRSISILVMIHMITRTSISNA). Tyr-36, Cys-56, Cys-59, and His-60 together coordinate heme. The helical transmembrane segment at 286 to 306 (VQGLLLLLASVILAQIFLVLK) threads the bilayer.

This sequence belongs to the cytochrome f family. In terms of assembly, the 4 large subunits of the cytochrome b6-f complex are cytochrome b6, subunit IV (17 kDa polypeptide, petD), cytochrome f and the Rieske protein, while the 4 small subunits are PetG, PetL, PetM and PetN. The complex functions as a dimer. The cofactor is heme.

It localises to the plastid. It is found in the chloroplast thylakoid membrane. Its function is as follows. Component of the cytochrome b6-f complex, which mediates electron transfer between photosystem II (PSII) and photosystem I (PSI), cyclic electron flow around PSI, and state transitions. The sequence is that of Cytochrome f from Cycas taitungensis (Prince sago).